Consider the following 195-residue polypeptide: dITP/XTP pyrophosphatase (195 aa).

Position 8 to 13 (8 to 13 (SNNQGK)) interacts with substrate. The Mg(2+) site is built by Glu39 and Asp68. The active-site Proton acceptor is Asp68. Substrate is bound by residues Ser69, 149-152 (FGYD), Lys172, and 177-178 (HR).

Belongs to the HAM1 NTPase family. As to quaternary structure, homodimer. Mg(2+) is required as a cofactor.

The catalysed reaction is XTP + H2O = XMP + diphosphate + H(+). It catalyses the reaction dITP + H2O = dIMP + diphosphate + H(+). The enzyme catalyses ITP + H2O = IMP + diphosphate + H(+). Its function is as follows. Pyrophosphatase that catalyzes the hydrolysis of nucleoside triphosphates to their monophosphate derivatives, with a high preference for the non-canonical purine nucleotides XTP (xanthosine triphosphate), dITP (deoxyinosine triphosphate) and ITP. Seems to function as a house-cleaning enzyme that removes non-canonical purine nucleotides from the nucleotide pool, thus preventing their incorporation into DNA/RNA and avoiding chromosomal lesions. In Staphylococcus aureus (strain Mu50 / ATCC 700699), this protein is dITP/XTP pyrophosphatase.